A 510-amino-acid polypeptide reads, in one-letter code: NAD(P)H-quinone oxidoreductase subunit 2 B, chloroplastic (510 aa).

The next 13 helical transmembrane spans lie at 24-44 (LLLF…GLIL), 59-79 (WFYF…LFRW), 99-119 (IFQF…VEYI), 124-144 (MAIT…MFLC), 149-169 (LITI…LSGY), 184-204 (LLMG…LYGL), 229-249 (ISIA…LAPF), 262-284 (TPVV…TRIF), 295-315 (WHLL…LIAI), 323-343 (MLAY…IVGD), 354-374 (YMLF…LFGL), 395-415 (ALSL…AGFF), and 418-438 (LHLF…IGLL).

It belongs to the complex I subunit 2 family. As to quaternary structure, NDH is composed of at least 16 different subunits, 5 of which are encoded in the nucleus.

The protein resides in the plastid. Its subcellular location is the chloroplast thylakoid membrane. The catalysed reaction is a plastoquinone + NADH + (n+1) H(+)(in) = a plastoquinol + NAD(+) + n H(+)(out). It carries out the reaction a plastoquinone + NADPH + (n+1) H(+)(in) = a plastoquinol + NADP(+) + n H(+)(out). In terms of biological role, NDH shuttles electrons from NAD(P)H:plastoquinone, via FMN and iron-sulfur (Fe-S) centers, to quinones in the photosynthetic chain and possibly in a chloroplast respiratory chain. The immediate electron acceptor for the enzyme in this species is believed to be plastoquinone. Couples the redox reaction to proton translocation, and thus conserves the redox energy in a proton gradient. The sequence is that of NAD(P)H-quinone oxidoreductase subunit 2 B, chloroplastic from Lemna minor (Common duckweed).